Reading from the N-terminus, the 426-residue chain is D-tagatose-1,6-bisphosphate aldolase subunit KbaZ (426 aa).

Belongs to the GatZ/KbaZ family. KbaZ subfamily. In terms of assembly, forms a complex with KbaY.

It participates in carbohydrate metabolism; D-tagatose 6-phosphate degradation; D-glyceraldehyde 3-phosphate and glycerone phosphate from D-tagatose 6-phosphate: step 2/2. Component of the tagatose-1,6-bisphosphate aldolase KbaYZ that is required for full activity and stability of the Y subunit. Could have a chaperone-like function for the proper and stable folding of KbaY. When expressed alone, KbaZ does not show any aldolase activity. The polypeptide is D-tagatose-1,6-bisphosphate aldolase subunit KbaZ (Shigella flexneri).